A 393-amino-acid chain; its full sequence is Elongation factor Tu (393 aa).

The tr-type G domain occupies 10–202; it reads KPHVNIGTIG…AVDEYIPTPE (193 aa). Residues 19-26 form a G1 region; the sequence is GHVDHGKT. 19–26 lines the GTP pocket; it reads GHVDHGKT. T26 lines the Mg(2+) pocket. The G2 stretch occupies residues 60–64; sequence GITIN. The G3 stretch occupies residues 81–84; sequence DCPG. GTP contacts are provided by residues 81 to 85 and 136 to 139; these read DCPGH and NKAD. Residues 136-139 are G4; it reads NKAD. The tract at residues 174–176 is G5; sequence SAL.

It belongs to the TRAFAC class translation factor GTPase superfamily. Classic translation factor GTPase family. EF-Tu/EF-1A subfamily. Monomer.

The protein localises to the cytoplasm. The enzyme catalyses GTP + H2O = GDP + phosphate + H(+). In terms of biological role, GTP hydrolase that promotes the GTP-dependent binding of aminoacyl-tRNA to the A-site of ribosomes during protein biosynthesis. The protein is Elongation factor Tu of Clostridium novyi (strain NT).